Reading from the N-terminus, the 242-residue chain is Biosynthetic peptidoglycan transglycosylase (242 aa).

Residues V21–F41 traverse the membrane as a helical segment.

Belongs to the glycosyltransferase 51 family.

It is found in the cell inner membrane. It catalyses the reaction [GlcNAc-(1-&gt;4)-Mur2Ac(oyl-L-Ala-gamma-D-Glu-L-Lys-D-Ala-D-Ala)](n)-di-trans,octa-cis-undecaprenyl diphosphate + beta-D-GlcNAc-(1-&gt;4)-Mur2Ac(oyl-L-Ala-gamma-D-Glu-L-Lys-D-Ala-D-Ala)-di-trans,octa-cis-undecaprenyl diphosphate = [GlcNAc-(1-&gt;4)-Mur2Ac(oyl-L-Ala-gamma-D-Glu-L-Lys-D-Ala-D-Ala)](n+1)-di-trans,octa-cis-undecaprenyl diphosphate + di-trans,octa-cis-undecaprenyl diphosphate + H(+). It functions in the pathway cell wall biogenesis; peptidoglycan biosynthesis. In terms of biological role, peptidoglycan polymerase that catalyzes glycan chain elongation from lipid-linked precursors. The polypeptide is Biosynthetic peptidoglycan transglycosylase (Salmonella arizonae (strain ATCC BAA-731 / CDC346-86 / RSK2980)).